The following is a 335-amino-acid chain: Glyceraldehyde-3-phosphate dehydrogenase (335 aa).

Residues 10–11, aspartate 33, arginine 77, and serine 119 contribute to the NAD(+) site; that span reads RI. Residues 150-152, threonine 181, 210-211, and arginine 233 contribute to the D-glyceraldehyde 3-phosphate site; these read SCT and TG. The active-site Nucleophile is cysteine 151. Asparagine 315 is an NAD(+) binding site.

The protein belongs to the glyceraldehyde-3-phosphate dehydrogenase family. As to quaternary structure, homotetramer.

It localises to the cytoplasm. It catalyses the reaction D-glyceraldehyde 3-phosphate + phosphate + NAD(+) = (2R)-3-phospho-glyceroyl phosphate + NADH + H(+). The protein operates within carbohydrate degradation; glycolysis; pyruvate from D-glyceraldehyde 3-phosphate: step 1/5. Catalyzes the oxidative phosphorylation of glyceraldehyde 3-phosphate (G3P) to 1,3-bisphosphoglycerate (BPG) using the cofactor NAD. The first reaction step involves the formation of a hemiacetal intermediate between G3P and a cysteine residue, and this hemiacetal intermediate is then oxidized to a thioester, with concomitant reduction of NAD to NADH. The reduced NADH is then exchanged with the second NAD, and the thioester is attacked by a nucleophilic inorganic phosphate to produce BPG. This chain is Glyceraldehyde-3-phosphate dehydrogenase (gap), found in Chlamydia pneumoniae (Chlamydophila pneumoniae).